A 665-amino-acid polypeptide reads, in one-letter code: Pentatricopeptide repeat-containing protein At1g04840 (665 aa).

11 PPR repeats span residues 90–124 (NPFV…GVKP), 125–155 (DRLT…TLKN), 160–190 (DSFV…SPDR), 195–229 (SILI…NSGS), 230–256 (WSTL…MPEK), 257–291 (NVVS…GLKP), 292–326 (NEYT…GIKL), 327–357 (DRAI…MNHK), 358–392 (DILS…GEKP), 393–423 (DEVV…MRLD), and 429–459 (TLKH…MPIN). The interval 464–539 (TWAALYRACK…SLGWSYIELD (76 aa)) is type E motif. The interval 540–570 (GQLNKFSAGDYSHKLTQEIGLKLDEIISLAI) is type E(+) motif. A type DYW motif region spans residues 571–665 (QKGYNPGADW…DGRCSCGDYW (95 aa)).

It belongs to the PPR family. PCMP-H subfamily.

The polypeptide is Pentatricopeptide repeat-containing protein At1g04840 (PCMP-H64) (Arabidopsis thaliana (Mouse-ear cress)).